The chain runs to 267 residues: Tryptophan synthase alpha chain (267 aa).

Active-site proton acceptor residues include Glu39 and Asp50.

This sequence belongs to the TrpA family. Tetramer of two alpha and two beta chains.

The catalysed reaction is (1S,2R)-1-C-(indol-3-yl)glycerol 3-phosphate + L-serine = D-glyceraldehyde 3-phosphate + L-tryptophan + H2O. The protein operates within amino-acid biosynthesis; L-tryptophan biosynthesis; L-tryptophan from chorismate: step 5/5. The alpha subunit is responsible for the aldol cleavage of indoleglycerol phosphate to indole and glyceraldehyde 3-phosphate. The sequence is that of Tryptophan synthase alpha chain from Helicobacter hepaticus (strain ATCC 51449 / 3B1).